The chain runs to 419 residues: Hyaluronan synthase (419 aa).

5 helical membrane passes run 8-28 (LIVL…MYLF), 33-53 (VGIY…LSFL), 318-338 (IVAL…VAIG), 345-365 (AIQL…IVAL), and 376-396 (PASF…LQPL).

Belongs to the NodC/HAS family. The cofactor is Mg(2+).

Its subcellular location is the cell membrane. The catalysed reaction is [hyaluronan](n) + UDP-N-acetyl-alpha-D-glucosamine = N-acetyl-beta-D-glucosaminyl-(1-&gt;4)-[hyaluronan](n) + UDP + H(+). It catalyses the reaction N-acetyl-beta-D-glucosaminyl-(1-&gt;4)-[hyaluronan](n) + UDP-alpha-D-glucuronate = [hyaluronan](n+1) + UDP + H(+). It functions in the pathway glycan biosynthesis; hyaluronan biosynthesis. Functionally, glycosaminoglycan synthesis. The hyaluronic acid capsule is involved in the pathogenicity of group A Streptococci; it may be the major virulence determinant. This chain is Hyaluronan synthase (hasA), found in Streptococcus pyogenes serotype M1.